Reading from the N-terminus, the 123-residue chain is UPF0102 protein DR_2282 (123 aa).

The protein belongs to the UPF0102 family.

The sequence is that of UPF0102 protein DR_2282 from Deinococcus radiodurans (strain ATCC 13939 / DSM 20539 / JCM 16871 / CCUG 27074 / LMG 4051 / NBRC 15346 / NCIMB 9279 / VKM B-1422 / R1).